A 450-amino-acid polypeptide reads, in one-letter code: Glutamyl-tRNA reductase (450 aa).

Substrate is bound by residues 45–48 (TCNR), S107, 112–114 (ERE), and Q118. The Nucleophile role is filled by C46. An NADP(+)-binding site is contributed by 196–201 (GTGAYA).

Belongs to the glutamyl-tRNA reductase family. As to quaternary structure, homodimer.

It carries out the reaction (S)-4-amino-5-oxopentanoate + tRNA(Glu) + NADP(+) = L-glutamyl-tRNA(Glu) + NADPH + H(+). The protein operates within porphyrin-containing compound metabolism; protoporphyrin-IX biosynthesis; 5-aminolevulinate from L-glutamyl-tRNA(Glu): step 1/2. Catalyzes the NADPH-dependent reduction of glutamyl-tRNA(Glu) to glutamate 1-semialdehyde (GSA). In Micrococcus luteus (strain ATCC 4698 / DSM 20030 / JCM 1464 / CCM 169 / CCUG 5858 / IAM 1056 / NBRC 3333 / NCIMB 9278 / NCTC 2665 / VKM Ac-2230) (Micrococcus lysodeikticus), this protein is Glutamyl-tRNA reductase.